The following is a 432-amino-acid chain: Enolase (432 aa).

Residue glutamine 166 participates in (2R)-2-phosphoglycerate binding. Residue glutamate 208 is the Proton donor of the active site. The Mg(2+) site is built by aspartate 245, glutamate 291, and aspartate 318. 4 residues coordinate (2R)-2-phosphoglycerate: lysine 343, arginine 372, serine 373, and lysine 394. The active-site Proton acceptor is lysine 343.

This sequence belongs to the enolase family. Requires Mg(2+) as cofactor.

It localises to the cytoplasm. Its subcellular location is the secreted. The protein resides in the cell surface. It carries out the reaction (2R)-2-phosphoglycerate = phosphoenolpyruvate + H2O. Its pathway is carbohydrate degradation; glycolysis; pyruvate from D-glyceraldehyde 3-phosphate: step 4/5. Catalyzes the reversible conversion of 2-phosphoglycerate (2-PG) into phosphoenolpyruvate (PEP). It is essential for the degradation of carbohydrates via glycolysis. This chain is Enolase, found in Leptospira interrogans serogroup Icterohaemorrhagiae serovar copenhageni (strain Fiocruz L1-130).